We begin with the raw amino-acid sequence, 347 residues long: UDP-N-acetylenolpyruvoylglucosamine reductase (347 aa).

The 175-residue stretch at 23–197 (LPARAARLLR…LRVRFRLPQA (175 aa)) folds into the FAD-binding PCMH-type domain. Arginine 174 is an active-site residue. Serine 247 functions as the Proton donor in the catalytic mechanism. Glutamate 343 is a catalytic residue.

This sequence belongs to the MurB family. It depends on FAD as a cofactor.

The protein localises to the cytoplasm. The catalysed reaction is UDP-N-acetyl-alpha-D-muramate + NADP(+) = UDP-N-acetyl-3-O-(1-carboxyvinyl)-alpha-D-glucosamine + NADPH + H(+). The protein operates within cell wall biogenesis; peptidoglycan biosynthesis. Cell wall formation. The sequence is that of UDP-N-acetylenolpyruvoylglucosamine reductase from Azoarcus sp. (strain BH72).